A 443-amino-acid chain; its full sequence is Phosphatidate cytidylyltransferase 2 (443 aa).

Basic and acidic residues predominate over residues 1-38 (MTELRQRAVREDAPPEDKESESEAKLDGETASDSESRA). The segment at 1–51 (MTELRQRAVREDAPPEDKESESEAKLDGETASDSESRAETAPPPTSIDDTP) is disordered. Serine 20 carries the phosphoserine modification. Threonine 30 is modified (phosphothreonine). A phosphoserine mark is found at serine 32, serine 34, and serine 36. Threonine 50 is subject to Phosphothreonine. 6 consecutive transmembrane segments (helical) span residues 78-98 (MIAF…MIVM), 129-149 (WYFL…DYFF), 165-185 (HRFI…LSLV), 212-232 (LVIH…SCVI), 261-281 (GFIG…YVMS), and 338-358 (SALS…ASGF).

The protein belongs to the CDS family. As to quaternary structure, homodimer.

It localises to the endoplasmic reticulum membrane. The enzyme catalyses a 1,2-diacyl-sn-glycero-3-phosphate + CTP + H(+) = a CDP-1,2-diacyl-sn-glycerol + diphosphate. The catalysed reaction is 1-octadecanoyl-2-(5Z,8Z,11Z,14Z-eicosatetraenoyl)-sn-glycero-3-phosphate + CTP + H(+) = 1-octadecanoyl-2-(5Z,8Z,11Z,14Z-eicosatetraenoyl)-sn-glycero-3-cytidine-5'-diphosphate + diphosphate. It carries out the reaction 1-octadecanoyl-2-(9Z,12Z-octadecadienoyl)-sn-glycero-3-phosphate + CTP + H(+) = 1-octadecanoyl-2-(9Z,12Z-octadecadienoyl)-sn-glycero-3-cytidine-5'-diphosphate + diphosphate. It catalyses the reaction 1-hexadecanoyl-2-(5Z,8Z,11Z,14Z-eicosatetraenoyl)-sn-glycero-3-phosphate + CTP + H(+) = 1-hexadecanoyl-2-(5Z,8Z,11Z,14Z-eicosatetraenoyl)-sn-glycero-3-cytidine-5'-diphosphate + diphosphate. The enzyme catalyses 1,2-di-(5Z,8Z,11Z,14Z)-eicosatetraenoyl-sn-glycero-3-phosphate + CTP + H(+) = 1,2-di-(5Z,8Z,11Z,14Z-eicosatetraenoyl)-sn-glycero-3-cytidine-5'-diphosphate + diphosphate. The catalysed reaction is 1-octadecanoyl-2-(9Z-octadecenoyl)-sn-glycero-3-phosphate + CTP + H(+) = 1-octadecanoyl-2-(9Z-octadecenoyl)-sn-glycero-3-cytidine-5'-diphosphate + diphosphate. It carries out the reaction 1-octadecanoyl-2-(4Z,7Z,10Z,13Z,16Z,19Z-docosahexaenoyl)-sn-glycero-3-phosphate + CTP + H(+) = 1-octadecanoyl-2-(4Z,7Z,10Z,13Z,16Z,19Z-docosahexaenoyl)-sn-glycero-3-cytidine-5'-diphosphate + diphosphate. It catalyses the reaction 1,2-di-(9Z,12Z-octadecadienoyl)-sn-glycero-3-phosphate + CTP + H(+) = 1,2-di-(9Z,12Z-octadecadienoyl)-sn-glycero-3-cytidine-5'-diphosphate + diphosphate. The enzyme catalyses 1,2-di-(9Z-octadecenoyl)-sn-glycero-3-phosphate + CTP + H(+) = 1,2-di-(9Z-octadecenoyl)-sn-glycero-3-cytidine-5'-diphosphate + diphosphate. The protein operates within phospholipid metabolism; CDP-diacylglycerol biosynthesis; CDP-diacylglycerol from sn-glycerol 3-phosphate: step 3/3. Its function is as follows. Catalyzes the conversion of phosphatidic acid (PA) to CDP-diacylglycerol (CDP-DAG), an essential intermediate in the synthesis of phosphatidylglycerol, cardiolipin and phosphatidylinositol. Exhibits specificity for the nature of the acyl chains at the sn-1 and sn-2 positions in the substrate, PA and the preferred acyl chain composition is 1-stearoyl-2-arachidonoyl-sn-phosphatidic acid. Plays an important role in regulating the growth and maturation of lipid droplets which are storage organelles at the center of lipid and energy homeostasis. The polypeptide is Phosphatidate cytidylyltransferase 2 (Rattus norvegicus (Rat)).